Consider the following 159-residue polypeptide: Crossover junction endodeoxyribonuclease RuvC (159 aa).

Catalysis depends on residues aspartate 7, glutamate 67, and aspartate 139. The Mg(2+) site is built by aspartate 7, glutamate 67, and aspartate 139.

The protein belongs to the RuvC family. In terms of assembly, homodimer which binds Holliday junction (HJ) DNA. The HJ becomes 2-fold symmetrical on binding to RuvC with unstacked arms; it has a different conformation from HJ DNA in complex with RuvA. In the full resolvosome a probable DNA-RuvA(4)-RuvB(12)-RuvC(2) complex forms which resolves the HJ. Mg(2+) serves as cofactor.

The protein resides in the cytoplasm. It catalyses the reaction Endonucleolytic cleavage at a junction such as a reciprocal single-stranded crossover between two homologous DNA duplexes (Holliday junction).. The RuvA-RuvB-RuvC complex processes Holliday junction (HJ) DNA during genetic recombination and DNA repair. Endonuclease that resolves HJ intermediates. Cleaves cruciform DNA by making single-stranded nicks across the HJ at symmetrical positions within the homologous arms, yielding a 5'-phosphate and a 3'-hydroxyl group; requires a central core of homology in the junction. The consensus cleavage sequence is 5'-(A/T)TT(C/G)-3'. Cleavage occurs on the 3'-side of the TT dinucleotide at the point of strand exchange. HJ branch migration catalyzed by RuvA-RuvB allows RuvC to scan DNA until it finds its consensus sequence, where it cleaves and resolves the cruciform DNA. This chain is Crossover junction endodeoxyribonuclease RuvC, found in Thermosynechococcus vestitus (strain NIES-2133 / IAM M-273 / BP-1).